Reading from the N-terminus, the 345-residue chain is Centromere protein L (345 aa).

2 positions are modified to phosphoserine: S40 and S54.

Belongs to the CENP-L/IML3 family. As to quaternary structure, component of the CENPA-CAD complex, composed of CENPI, CENPK, CENPL, CENPO, CENPP, CENPQ, CENPR and CENPS. The CENPA-CAD complex interacts with the CENPA-NAC complex, at least composed of CENPA, CENPC, CENPH, CENPM, CENPN, CENPT and CENPU.

The protein localises to the nucleus. It is found in the chromosome. Its subcellular location is the centromere. Functionally, component of the CENPA-CAD (nucleosome distal) complex, a complex recruited to centromeres which is involved in assembly of kinetochore proteins, mitotic progression and chromosome segregation. May be involved in incorporation of newly synthesized CENPA into centromeres via its interaction with the CENPA-NAC complex. The polypeptide is Centromere protein L (Cenpl) (Rattus norvegicus (Rat)).